We begin with the raw amino-acid sequence, 450 residues long: Saccharopine dehydrogenase [NADP(+), L-glutamate-forming] (450 aa).

NADP(+) is bound by residues 11–14, 33–35, 55–56, I76, 98–99, 125–127, and S175; these read SGFV, CRT, DV, TS, and LDP. Residues 99–100 and D126 each bind L-saccharopine; that span reads SY. L-saccharopine contacts are provided by residues R224 and 245 to 247; that span reads TLR.

This sequence belongs to the saccharopine dehydrogenase family. In terms of assembly, homodimer.

It catalyses the reaction L-saccharopine + NADP(+) + H2O = (S)-2-amino-6-oxohexanoate + L-glutamate + NADPH + H(+). The protein operates within amino-acid biosynthesis; L-lysine biosynthesis via AAA pathway; L-lysine from L-alpha-aminoadipate (fungal route): step 2/3. The protein is Saccharopine dehydrogenase [NADP(+), L-glutamate-forming] (LYS3) of Pyricularia oryzae (strain 70-15 / ATCC MYA-4617 / FGSC 8958) (Rice blast fungus).